The following is a 95-amino-acid chain: Large ribosomal subunit protein uL23 (95 aa).

The protein belongs to the universal ribosomal protein uL23 family. Part of the 50S ribosomal subunit. Contacts protein L29, and trigger factor when it is bound to the ribosome.

One of the early assembly proteins it binds 23S rRNA. One of the proteins that surrounds the polypeptide exit tunnel on the outside of the ribosome. Forms the main docking site for trigger factor binding to the ribosome. The chain is Large ribosomal subunit protein uL23 from Coxiella burnetii (strain RSA 493 / Nine Mile phase I).